The primary structure comprises 78 residues: Mitochondrial import inner membrane translocase subunit Tim9 (78 aa).

The Twin CX3C motif signature appears at 24-48 (CFTSCVNEFGSRTVNAKEESCANNC). 2 disulfide bridges follow: Cys24/Cys48 and Cys28/Cys44.

It belongs to the small Tim family. In terms of assembly, heterohexamer; composed of 3 copies of tim-9/tin-9.1 and 3 copies of tim-10/tin-10, named soluble 70 kDa complex. The complex associates with the tim-22 component of the TIM22 complex. Interacts with multi-pass transmembrane proteins in transit.

It localises to the mitochondrion inner membrane. Its function is as follows. Mitochondrial intermembrane chaperone that participates in the import and insertion of multi-pass transmembrane proteins into the mitochondrial inner membrane. May also be required for the transfer of beta-barrel precursors from the TOM complex to the sorting and assembly machinery (SAM complex) of the outer membrane. Acts as a chaperone-like protein that protects the hydrophobic precursors from aggregation and guide them through the mitochondrial intermembrane space. The sequence is that of Mitochondrial import inner membrane translocase subunit Tim9 (tin-9.1) from Caenorhabditis briggsae.